A 1121-amino-acid chain; its full sequence is Transcription factor CSR2 (1121 aa).

Ser23, Ser46, and Ser127 each carry phosphoserine. 4 disordered regions span residues Pro273–Pro342, His513–Leu532, Leu579–Met600, and Ile837–Ser860. Residues Thr276–Ala310 are compositionally biased toward polar residues. 3 stretches are compositionally biased toward low complexity: residues Asn318–Ala329, Ser519–Pro529, and Asn582–Gly597. Ser327 is modified (phosphoserine). The segment covering Ile837 to Val846 has biased composition (basic and acidic residues). Lys841 is covalently cross-linked (Glycyl lysine isopeptide (Lys-Gly) (interchain with G-Cter in ubiquitin)). The segment covering Asn847–Ser860 has biased composition (polar residues). Ser987 is modified (phosphoserine). Residues Lys999 to Gly1009 are compositionally biased toward polar residues. Disordered regions lie at residues Lys999–Pro1022 and Thr1075–Ser1121. The segment covering Thr1084 to Asn1093 has biased composition (low complexity).

The protein belongs to the CSR2 family. Post-translationally, phosphorylated by CDC28.

It is found in the cytoplasm. Its subcellular location is the nucleus. Functionally, transcription factor involved in the regulation of fermentation and aerobic oxidation. Acts as a repressor of CYC1, which is involved in electron flow through the mitochondria under aerobic condition. Required for pseudohyphal formation upon nitrogen starvation. May be involved in viability at stationary phase and aging. The polypeptide is Transcription factor CSR2 (CSR2) (Saccharomyces cerevisiae (strain ATCC 204508 / S288c) (Baker's yeast)).